Reading from the N-terminus, the 201-residue chain is MALSWVLTVLSLLPLLEAQIPLCANLVPVPITNATLDRITGKWFYIASAFRNEEYNKSVQEIQATFFYFTPNKTEDTIFLREYQTRQNQCFYNSSYLNVQRENGTVSRYEGGREHVAHLLFLRDTKTLMFGSYLDDEKNWGLSFYADKPETTKEQLGEFYEALDCLCIPRSDVMYTDWKKDKCEPLEKQHEKERKQEEGES.

The signal sequence occupies residues 1–18 (MALSWVLTVLSLLPLLEA). Q19 is modified (pyrrolidone carboxylic acid). Disulfide bonds link C23-C165 and C90-C183. An N-linked (GlcNAc...) (complex) asparagine glycan is attached at N33. N56, N72, N93, and N103 each carry an N-linked (GlcNAc...) asparagine glycan.

Belongs to the calycin superfamily. Lipocalin family. N-glycosylated. N-glycan heterogeneity at Asn-33: Hex5HexNAc4 (minor), Hex6HexNAc5 (major) and dHex1Hex6HexNAc5 (minor). Expressed by the liver and secreted in plasma.

The protein resides in the secreted. Functions as a transport protein in the blood stream. Binds various hydrophobic ligands in the interior of its beta-barrel domain. Also binds synthetic drugs and influences their distribution and availability. Appears to function in modulating the activity of the immune system during the acute-phase reaction. The polypeptide is Alpha-1-acid glycoprotein 2 (ORM2) (Homo sapiens (Human)).